A 208-amino-acid chain; its full sequence is Protein-L-isoaspartate O-methyltransferase (208 aa).

S59 is a catalytic residue.

It belongs to the methyltransferase superfamily. L-isoaspartyl/D-aspartyl protein methyltransferase family.

It localises to the cytoplasm. The enzyme catalyses [protein]-L-isoaspartate + S-adenosyl-L-methionine = [protein]-L-isoaspartate alpha-methyl ester + S-adenosyl-L-homocysteine. Functionally, catalyzes the methyl esterification of L-isoaspartyl residues in peptides and proteins that result from spontaneous decomposition of normal L-aspartyl and L-asparaginyl residues. It plays a role in the repair and/or degradation of damaged proteins. This chain is Protein-L-isoaspartate O-methyltransferase, found in Vibrio vulnificus (strain CMCP6).